The chain runs to 404 residues: L-cysteine:1D-myo-inositol 2-amino-2-deoxy-alpha-D-glucopyranoside ligase 1 (404 aa).

Zn(2+) is bound at residue Cys47. L-cysteinyl-5'-AMP is bound by residues 47 to 50, Thr62, and 85 to 87; these read CGIT and NIT. Positions 49 to 59 match the 'HIGH' region motif; it reads ITPYDSTHLGH. Residues 188-193 carry the 'ERGGDP' region motif; sequence ERGGDP. Trp228 contributes to the L-cysteinyl-5'-AMP binding site. Cys232 serves as a coordination point for Zn(2+). Position 250 to 252 (250 to 252) interacts with L-cysteinyl-5'-AMP; that stretch reads GSD. His257 is a binding site for Zn(2+). Ile284 provides a ligand contact to L-cysteinyl-5'-AMP. The 'KMSKS' region motif lies at 290–294; sequence KMSKS.

The protein belongs to the class-I aminoacyl-tRNA synthetase family. MshC subfamily. In terms of assembly, monomer. The cofactor is Zn(2+).

The enzyme catalyses 1D-myo-inositol 2-amino-2-deoxy-alpha-D-glucopyranoside + L-cysteine + ATP = 1D-myo-inositol 2-(L-cysteinylamino)-2-deoxy-alpha-D-glucopyranoside + AMP + diphosphate + H(+). Its function is as follows. Catalyzes the ATP-dependent condensation of GlcN-Ins and L-cysteine to form L-Cys-GlcN-Ins. The chain is L-cysteine:1D-myo-inositol 2-amino-2-deoxy-alpha-D-glucopyranoside ligase 1 from Corynebacterium jeikeium (strain K411).